Consider the following 476-residue polypeptide: Bifunctional protein HldE (476 aa).

The tract at residues 1 to 318 is ribokinase; the sequence is MKLDLTVLEQ…YTALHGDKLA (318 aa). An ATP-binding site is contributed by 195 to 198; it reads NLGE. The active site involves Asp-264. The interval 344–476 is cytidylyltransferase; the sequence is MTNGCFDILH…MIDTILDREG (133 aa).

It in the N-terminal section; belongs to the carbohydrate kinase PfkB family. The protein in the C-terminal section; belongs to the cytidylyltransferase family. Homodimer.

The enzyme catalyses D-glycero-beta-D-manno-heptose 7-phosphate + ATP = D-glycero-beta-D-manno-heptose 1,7-bisphosphate + ADP + H(+). It carries out the reaction D-glycero-beta-D-manno-heptose 1-phosphate + ATP + H(+) = ADP-D-glycero-beta-D-manno-heptose + diphosphate. It functions in the pathway nucleotide-sugar biosynthesis; ADP-L-glycero-beta-D-manno-heptose biosynthesis; ADP-L-glycero-beta-D-manno-heptose from D-glycero-beta-D-manno-heptose 7-phosphate: step 1/4. Its pathway is nucleotide-sugar biosynthesis; ADP-L-glycero-beta-D-manno-heptose biosynthesis; ADP-L-glycero-beta-D-manno-heptose from D-glycero-beta-D-manno-heptose 7-phosphate: step 3/4. Its function is as follows. Catalyzes the phosphorylation of D-glycero-D-manno-heptose 7-phosphate at the C-1 position to selectively form D-glycero-beta-D-manno-heptose-1,7-bisphosphate. In terms of biological role, catalyzes the ADP transfer from ATP to D-glycero-beta-D-manno-heptose 1-phosphate, yielding ADP-D-glycero-beta-D-manno-heptose. The polypeptide is Bifunctional protein HldE (Chromohalobacter salexigens (strain ATCC BAA-138 / DSM 3043 / CIP 106854 / NCIMB 13768 / 1H11)).